An 85-amino-acid chain; its full sequence is Small ribosomal subunit protein bS16 (85 aa).

It belongs to the bacterial ribosomal protein bS16 family.

This is Small ribosomal subunit protein bS16 from Xanthomonas oryzae pv. oryzae (strain PXO99A).